Consider the following 77-residue polypeptide: Large ribosomal subunit protein bL28 (77 aa).

Belongs to the bacterial ribosomal protein bL28 family.

The polypeptide is Large ribosomal subunit protein bL28 (Ralstonia nicotianae (strain ATCC BAA-1114 / GMI1000) (Ralstonia solanacearum)).